A 431-amino-acid chain; its full sequence is Urokinase-type plasminogen activator (431 aa).

A signal peptide spans 1 to 20; the sequence is MRALLARLLLCVLVVSDSKG. One can recognise an EGF-like domain in the interval 27-63; sequence VPSNCDCLNGGTCVSNKYFSNIHWCNCPKKFGGQHCE. Disulfide bonds link Cys31–Cys39, Cys33–Cys51, Cys53–Cys62, Cys70–Cys151, Cys91–Cys133, and Cys122–Cys146. A binds urokinase plasminogen activator surface receptor region spans residues 34–57; sequence LNGGTCVSNKYFSNIHWCNCPKKF. A glycan (O-linked (Fuc) threonine) is linked at Thr38. Positions 70 to 151 constitute a Kringle domain; sequence CYEGNGHFYR…LVQECMVHDC (82 aa). A connecting peptide region spans residues 152–177; that stretch reads ADGKKPSSPPEELKFQCGQKTLRPRF. Position 158 is a phosphoserine (Ser158). Cystine bridges form between Cys168–Cys299, Cys209–Cys225, Cys217–Cys288, Cys313–Cys382, Cys345–Cys361, and Cys372–Cys400. The region spanning 179 to 424 is the Peptidase S1 domain; it reads IIGGEFTTIE…FLPWIRSHTK (246 aa). Catalysis depends on charge relay system residues His224 and Asp275. N-linked (GlcNAc...) asparagine glycosylation is present at Asn322. Ser323 carries the post-translational modification Phosphoserine. The Charge relay system role is filled by Ser376.

The protein belongs to the peptidase S1 family. In terms of assembly, found in high and low molecular mass forms. Each consists of two chains, A and B. The high molecular mass form contains a long chain A which is cleaved to yield a short chain A. Forms heterodimer with SERPINA5. Binds LRP1B; binding is followed by internalization and degradation. Interacts with MRC2. Interacts with PLAUR. In complex with SERPINE1, interacts with PLAUR/uPAR. Interacts with SORL1 and LRP1, either alone or in complex with SERPINE1; these interactions are abolished in the presence of LRPAP1/RAP. The ternary complex composed of PLAUR-PLAU-PAI1 also interacts with SORLA. Post-translationally, phosphorylation of Ser-158 and Ser-323 abolishes proadhesive ability but does not interfere with receptor binding. In terms of processing, produced as an inactive single-chain protein (pro-uPA or sc-uPA), is processed into the active disulfide-linked two-chain form of PLAU/uPA by a proteolytic event mediated, at least, by TMPRSS4. In terms of tissue distribution, expressed in the prostate gland and prostate cancers.

Its subcellular location is the secreted. The catalysed reaction is Specific cleavage of Arg-|-Val bond in plasminogen to form plasmin.. Inhibited by SERPINA5. Inhibited by SERPINE1. In terms of biological role, specifically cleaves the zymogen plasminogen to form the active enzyme plasmin. The protein is Urokinase-type plasminogen activator of Homo sapiens (Human).